Here is a 941-residue protein sequence, read N- to C-terminus: Zinc finger protein 507 (941 aa).

Position 95 is a phosphoserine (Ser95). C2H2-type zinc fingers lie at residues 122 to 144 (YQCSLCKFLSPSFSVLKEHVKQH) and 152 to 175 (LMCSECHATSRSQQELEAHVVSEH). The segment covering 165 to 177 (QELEAHVVSEHEN) has biased composition (basic and acidic residues). The segment at 165–198 (QELEAHVVSEHENSASSQARSSPSGQGATERKSE) is disordered. Over residues 178-192 (SASSQARSSPSGQGA) the composition is skewed to low complexity. A C2H2-type 3 zinc finger spans residues 237–259 (YRCLFCSYTCGQQRMLKTHAWKH). Ser415 carries the phosphoserine modification. Positions 455–477 (ELSKGLAPDENAPPGRRRTNSES) are disordered. 5 C2H2-type zinc fingers span residues 630–652 (YRCRLCNYSSGNRGYIKQHLRVH), 658–680 (YQCPICEHIAENSKDLESHMINH), 686–709 (HQCKQCKESFHYKSQLRNHEREQH), 746–768 (YRCDVCDYTSTTYVGVRNHRRVH), and 774–796 (YRCSLCGYVCSHPPSLKSHMWKH). A disordered region spans residues 823–856 (GKSRGKPLLTSSEERTGPTTGSPENLVSSSELTS). Residues 839 to 856 (GPTTGSPENLVSSSELTS) show a composition bias toward polar residues. The C2H2-type 9 zinc-finger motif lies at 899–921 (FCCCICGFESTSKESLLDHMKEH).

Belongs to the krueppel C2H2-type zinc-finger protein family.

The protein resides in the nucleus. In terms of biological role, may be involved in transcriptional regulation. In Mus musculus (Mouse), this protein is Zinc finger protein 507 (Znf507).